A 914-amino-acid polypeptide reads, in one-letter code: Protein GAMETE EXPRESSED 2 (914 aa).

Filamin repeat units follow at residues 249–382 (IGYC…IKEV) and 391–485 (ACSV…DVNV). A helical membrane pass occupies residues 893-913 (LVVVPFSFFSIKLFSLLMVLI).

In terms of tissue distribution, in tricellular pollen, expressed in mature sperm cells but not in the vegetative cell. In bicellular pollen, detected in the progenitor generative cell. Detected in the egg cell within the female gametophyte.

The protein localises to the cell membrane. This Arabidopsis thaliana (Mouse-ear cress) protein is Protein GAMETE EXPRESSED 2 (GEX2).